The following is a 260-amino-acid chain: OCIA domain-containing protein 1 (260 aa).

Positions 1 to 110 (MDSPLSDGSR…MRLPNSRLGE (110 aa)) constitute an OCIA domain. Positions 146–260 (DVYTDEGLNP…KNKYGDSWQD (115 aa)) are disordered. Residues 155–164 (PSRSTALNLD) are compositionally biased toward polar residues. The span at 205–215 (EDLRKKNREGY) shows a compositional bias: basic and acidic residues.

This sequence belongs to the OCIAD1 family.

The protein is OCIA domain-containing protein 1 of Drosophila pseudoobscura pseudoobscura (Fruit fly).